Consider the following 186-residue polypeptide: Ribosome-recycling factor (186 aa).

It belongs to the RRF family.

It is found in the cytoplasm. Functionally, responsible for the release of ribosomes from messenger RNA at the termination of protein biosynthesis. May increase the efficiency of translation by recycling ribosomes from one round of translation to another. The polypeptide is Ribosome-recycling factor (Albidiferax ferrireducens (strain ATCC BAA-621 / DSM 15236 / T118) (Rhodoferax ferrireducens)).